Consider the following 190-residue polypeptide: Lipid A acyltransferase PagP (190 aa).

Residues 1–18 (MKRLISCLTIICALNASA) form the signal peptide. Active-site residues include histidine 60, aspartate 103, and serine 104.

This sequence belongs to the lipid A palmitoyltransferase family. Homodimer.

It localises to the cell outer membrane. It carries out the reaction a lipid A + a 1,2-diacyl-sn-glycero-3-phosphocholine = a hepta-acyl lipid A + a 2-acyl-sn-glycero-3-phosphocholine. It catalyses the reaction a lipid IVA + a 1,2-diacyl-sn-glycero-3-phosphocholine = a lipid IVB + a 2-acyl-sn-glycero-3-phosphocholine. The catalysed reaction is a lipid IIA + a 1,2-diacyl-sn-glycero-3-phosphocholine = a lipid IIB + a 2-acyl-sn-glycero-3-phosphocholine. Functionally, transfers a fatty acid residue from the sn-1 position of a phospholipid to the N-linked hydroxyfatty acid chain on the proximal unit of lipid A or its precursors. The chain is Lipid A acyltransferase PagP from Legionella pneumophila subsp. pneumophila (strain Philadelphia 1 / ATCC 33152 / DSM 7513).